A 164-amino-acid polypeptide reads, in one-letter code: ATP synthase subunit b (164 aa).

Residues 4 to 24 (LGINPTLFIAQLINFLLLIFI) form a helical membrane-spanning segment.

It belongs to the ATPase B chain family. As to quaternary structure, F-type ATPases have 2 components, F(1) - the catalytic core - and F(0) - the membrane proton channel. F(1) has five subunits: alpha(3), beta(3), gamma(1), delta(1), epsilon(1). F(0) has four main subunits: a(1), b(2) and c(10-14). The alpha and beta chains form an alternating ring which encloses part of the gamma chain. F(1) is attached to F(0) by a central stalk formed by the gamma and epsilon chains, while a peripheral stalk is formed by the delta and b chains.

It localises to the cell membrane. F(1)F(0) ATP synthase produces ATP from ADP in the presence of a proton or sodium gradient. F-type ATPases consist of two structural domains, F(1) containing the extramembraneous catalytic core and F(0) containing the membrane proton channel, linked together by a central stalk and a peripheral stalk. During catalysis, ATP synthesis in the catalytic domain of F(1) is coupled via a rotary mechanism of the central stalk subunits to proton translocation. Functionally, component of the F(0) channel, it forms part of the peripheral stalk, linking F(1) to F(0). The polypeptide is ATP synthase subunit b (Chloroflexus aurantiacus (strain ATCC 29366 / DSM 635 / J-10-fl)).